A 101-amino-acid polypeptide reads, in one-letter code: Small ribosomal subunit protein uS14 (101 aa).

This sequence belongs to the universal ribosomal protein uS14 family. Part of the 30S ribosomal subunit. Contacts proteins S3 and S10.

In terms of biological role, binds 16S rRNA, required for the assembly of 30S particles and may also be responsible for determining the conformation of the 16S rRNA at the A site. The chain is Small ribosomal subunit protein uS14 from Shewanella loihica (strain ATCC BAA-1088 / PV-4).